The following is a 311-amino-acid chain: Porphobilinogen deaminase (311 aa).

Cys243 is modified (S-(dipyrrolylmethanemethyl)cysteine).

Belongs to the HMBS family. As to quaternary structure, monomer. Requires dipyrromethane as cofactor.

It carries out the reaction 4 porphobilinogen + H2O = hydroxymethylbilane + 4 NH4(+). The protein operates within porphyrin-containing compound metabolism; protoporphyrin-IX biosynthesis; coproporphyrinogen-III from 5-aminolevulinate: step 2/4. In terms of biological role, tetrapolymerization of the monopyrrole PBG into the hydroxymethylbilane pre-uroporphyrinogen in several discrete steps. This chain is Porphobilinogen deaminase, found in Aliivibrio salmonicida (strain LFI1238) (Vibrio salmonicida (strain LFI1238)).